Here is a 119-residue protein sequence, read N- to C-terminus: Large ribosomal subunit protein bL17 (119 aa).

This sequence belongs to the bacterial ribosomal protein bL17 family. In terms of assembly, part of the 50S ribosomal subunit. Contacts protein L32.

This Ureaplasma parvum serovar 3 (strain ATCC 27815 / 27 / NCTC 11736) protein is Large ribosomal subunit protein bL17.